The primary structure comprises 488 residues: 1-aminocyclopropane-1-carboxylate synthase-like protein 1 (488 aa).

Lysine 273 is subject to N6-(pyridoxal phosphate)lysine.

Belongs to the class-I pyridoxal-phosphate-dependent aminotransferase family. As to quaternary structure, homodimer. In terms of tissue distribution, expressed in young leaves and flowers. Not expressed in roots.

This is 1-aminocyclopropane-1-carboxylate synthase-like protein 1 (ACS1) from Arabidopsis thaliana (Mouse-ear cress).